Reading from the N-terminus, the 375-residue chain is Odorant receptor 49b (375 aa).

Residues 1–28 (MFEDIQLIYMNIKILRFWALLYDKNLRR) lie on the Cytoplasmic side of the membrane. A helical membrane pass occupies residues 29–49 (YVCIGLASFHIFTQIVYMMST). Over 50-60 (NEGLTGIIRNS) the chain is Extracellular. A helical transmembrane segment spans residues 61-77 (YMLVLWINTVLRAYLLL). The Cytoplasmic segment spans residues 78-121 (ADHDRYLALIQKLTEAYYDLLNLNDSYISEILDQVNKVGKLMAR). The chain crosses the membrane as a helical span at residues 122 to 142 (GNLFFGMLTSMGFGLYPLSSS). The Extracellular portion of the chain corresponds to 143 to 176 (ERVLPFGSKIPGLNEYESPYYEMWYIFQMLITPM). A helical transmembrane segment spans residues 177 to 197 (GCCMYIPYTSLIVGLIMFGIV). Over 198 to 251 (RCKALQHRLRQVALKHPYGDRDPRELREEIIACIRYQQSIIEYMDHINELTTMM) the chain is Cytoplasmic. The helical transmembrane segment at 252–272 (FLFELMAFSALLCALLFMLII) threads the bilayer. The Extracellular segment spans residues 273-278 (VSGTSQ). The chain crosses the membrane as a helical span at residues 279 to 299 (LIIVCMYINMILAQILALYWY). Residues 300 to 342 (ANELREQNLAVATAAYETEWFTFDVPLRKNILFMMMRAQRPAA) are Cytoplasmic-facing. Residues 343 to 363 (ILLGNIRPITLELFQNLLNTT) traverse the membrane as a helical segment. Residues 364-375 (YTFFTVLKRVYG) are Extracellular-facing.

It belongs to the insect chemoreceptor superfamily. Heteromeric odorant receptor channel (TC 1.A.69) family. Or30a subfamily. In terms of assembly, interacts with Orco. Complexes exist early in the endomembrane system in olfactory sensory neurons (OSNs), coupling these complexes to the conserved ciliary trafficking pathway. In terms of tissue distribution, expressed in olfactory sensory neurons in the antenna.

It localises to the cell membrane. Functionally, odorant receptor which mediates acceptance or avoidance behavior, depending on its substrates. The odorant receptor repertoire encodes a large collection of odor stimuli that vary widely in identity, intensity, and duration. May form a complex with Orco to form odorant-sensing units, providing sensitive and prolonged odorant signaling and calcium permeability. The polypeptide is Odorant receptor 49b (Or49b) (Drosophila melanogaster (Fruit fly)).